Consider the following 466-residue polypeptide: Alpha-1A adrenergic receptor (466 aa).

The Extracellular segment spans residues 1–25 (MVFLSGNASDSSNCTHPPAPVNISK). Residues N7, N13, and N22 are each glycosylated (N-linked (GlcNAc...) asparagine). The helical transmembrane segment at 26-51 (AILLGVILGGLILFGVLGNILVILSV) threads the bilayer. Over 52 to 63 (ACHRHLHSVTHY) the chain is Cytoplasmic. The helical transmembrane segment at 64–89 (YIVNLAVADLLLTSTVLPFSAIFEIL) threads the bilayer. Topologically, residues 90-99 (GYWAFGRVFC) are extracellular. A helical transmembrane segment spans residues 100-122 (NIWAAVDVLCCTASIISLCVISI). Residues 123–143 (DRYIGVSYPLRYPTIVTQRRG) are Cytoplasmic-facing. The chain crosses the membrane as a helical span at residues 144-168 (LRALLCVWAFSLVISVGPLFGWRQP). Residues 169-181 (APDDETICQINEE) are Extracellular-facing. The chain crosses the membrane as a helical span at residues 182-205 (PGYVLFSALGSFYVPLTIILAMYC). The Cytoplasmic portion of the chain corresponds to 206–272 (RVYVVAKRES…KFSREKKAAK (67 aa)). A helical transmembrane segment spans residues 273–297 (TLGIVVGCFVLCWLPFFLVMPIGSF). The Extracellular segment spans residues 298–304 (FPDFKPP). A helical transmembrane segment spans residues 305-329 (ETVFKIVFWLGYLNSCINPIIYPCS). Over 330-466 (SQEFKKAFQN…ISLSENGEEV (137 aa)) the chain is Cytoplasmic. A Nuclear localization signal motif is present at residues 334–349 (KKAFQNVLKIQCLRRK). C345 carries the S-palmitoyl cysteine lipid modification.

Belongs to the G-protein coupled receptor 1 family. Adrenergic receptor subfamily. ADRA1A sub-subfamily. In terms of assembly, homo- and heterooligomer. Heterooligomerizes with ADRA1B homooligomers in cardiac myocytes. Interacts with CAVIN4. As to expression, abundant in liver, vas deferens, brain, and aorta, but not in heart.

It localises to the nucleus membrane. Its subcellular location is the cell membrane. The protein resides in the cytoplasm. It is found in the membrane. The protein localises to the caveola. This alpha-adrenergic receptor mediates its action by association with G proteins that activate a phosphatidylinositol-calcium second messenger system. Its effect is mediated by G(q) and G(11) proteins. Nuclear ADRA1A-ADRA1B heterooligomers regulate phenylephrine (PE)-stimulated ERK signaling in cardiac myocytes. This Oryctolagus cuniculus (Rabbit) protein is Alpha-1A adrenergic receptor (ADRA1A).